A 500-amino-acid polypeptide reads, in one-letter code: AAA-ATPase At3g28580 (500 aa).

Residues Leu7–Phe29 form a helical membrane-spanning segment. The tract at residues Asn174–Lys193 is disordered. The span at Tyr180–Lys193 shows a compositional bias: polar residues. Gly247–Ser254 contacts ATP. Residues Lys462 to Asn500 are disordered.

Belongs to the AAA ATPase family. BCS1 subfamily. Mg(2+) is required as a cofactor.

It is found in the membrane. The enzyme catalyses ATP + H2O = ADP + phosphate + H(+). The chain is AAA-ATPase At3g28580 from Arabidopsis thaliana (Mouse-ear cress).